A 1603-amino-acid polypeptide reads, in one-letter code: DNA polymerase theta (1603 aa).

A Helicase ATP-binding domain is found at E38–A208. Residue A51–S58 participates in ATP binding. Residues D149–H152 carry the DEAH box motif. One can recognise a Helicase C-terminal domain in the interval T283–E434.

It belongs to the DNA polymerase type-A family.

It localises to the nucleus. It carries out the reaction DNA(n) + a 2'-deoxyribonucleoside 5'-triphosphate = DNA(n+1) + diphosphate. Functionally, DNA polymerase that promotes microhomology-mediated end-joining (MMEJ), an alternative non-homologous end-joining (NHEJ) machinery triggered in response to double-strand breaks in DNA. MMEJ is an error-prone repair pathway that produces deletions of sequences from the strand being repaired and promotes genomic rearrangements, such as telomere fusions. Required to prevent extensive loss of sequences near G-quadruplex (G4) DNA sites, which are prone to cause genome alterations, by generating deletions. This is DNA polymerase theta from Caenorhabditis elegans.